The sequence spans 56 residues: Small ribosomal subunit protein uS14 (56 aa).

The Zn(2+) site is built by cysteine 21, cysteine 24, cysteine 39, and cysteine 42.

This sequence belongs to the universal ribosomal protein uS14 family. Zn(2+) is required as a cofactor.

The polypeptide is Small ribosomal subunit protein uS14 (RPS29) (Triticum aestivum (Wheat)).